The sequence spans 443 residues: Histidinol dehydrogenase (443 aa).

Residues Tyr-133, Gln-191, and Asn-214 each coordinate NAD(+). Positions 240, 262, and 265 each coordinate substrate. Zn(2+) contacts are provided by Gln-262 and His-265. Residues Glu-329 and His-330 each act as proton acceptor in the active site. Substrate is bound by residues His-330, Asp-363, Glu-417, and His-422. Asp-363 lines the Zn(2+) pocket. Position 422 (His-422) interacts with Zn(2+).

It belongs to the histidinol dehydrogenase family. As to quaternary structure, homodimer. The cofactor is Zn(2+).

It catalyses the reaction L-histidinol + 2 NAD(+) + H2O = L-histidine + 2 NADH + 3 H(+). It functions in the pathway amino-acid biosynthesis; L-histidine biosynthesis; L-histidine from 5-phospho-alpha-D-ribose 1-diphosphate: step 9/9. Catalyzes the sequential NAD-dependent oxidations of L-histidinol to L-histidinaldehyde and then to L-histidine. The chain is Histidinol dehydrogenase from Yersinia pestis.